We begin with the raw amino-acid sequence, 216 residues long: Protein-L-isoaspartate O-methyltransferase 1 (216 aa).

S60 is an active-site residue.

This sequence belongs to the methyltransferase superfamily. L-isoaspartyl/D-aspartyl protein methyltransferase family.

It localises to the cytoplasm. It catalyses the reaction [protein]-L-isoaspartate + S-adenosyl-L-methionine = [protein]-L-isoaspartate alpha-methyl ester + S-adenosyl-L-homocysteine. Catalyzes the methyl esterification of L-isoaspartyl residues in peptides and proteins that result from spontaneous decomposition of normal L-aspartyl and L-asparaginyl residues. It plays a role in the repair and/or degradation of damaged proteins. The protein is Protein-L-isoaspartate O-methyltransferase 1 (pcm1) of Archaeoglobus fulgidus (strain ATCC 49558 / DSM 4304 / JCM 9628 / NBRC 100126 / VC-16).